Consider the following 460-residue polypeptide: UDP-N-acetylmuramate--L-alanine ligase (460 aa).

118-124 contacts ATP; sequence GAHGKTT.

Belongs to the MurCDEF family.

The protein localises to the cytoplasm. The enzyme catalyses UDP-N-acetyl-alpha-D-muramate + L-alanine + ATP = UDP-N-acetyl-alpha-D-muramoyl-L-alanine + ADP + phosphate + H(+). It functions in the pathway cell wall biogenesis; peptidoglycan biosynthesis. Its function is as follows. Cell wall formation. This is UDP-N-acetylmuramate--L-alanine ligase from Clostridium botulinum (strain Eklund 17B / Type B).